The primary structure comprises 347 residues: D-alanine--D-alanine ligase (347 aa).

The 199-residue stretch at 134 to 332 (KLYAKDLGVK…LAQSLPKTPK (199 aa)) folds into the ATP-grasp domain. 161 to 216 (LMNFNFPFIIKPNNAGSSLGVNVVKEEKELVYALDGAFEYSKEVLIEPFIQGVKEY) lines the ATP pocket. Positions 288, 300, and 302 each coordinate Mg(2+).

It belongs to the D-alanine--D-alanine ligase family. The cofactor is Mg(2+). Mn(2+) serves as cofactor.

The protein localises to the cytoplasm. It carries out the reaction 2 D-alanine + ATP = D-alanyl-D-alanine + ADP + phosphate + H(+). The protein operates within cell wall biogenesis; peptidoglycan biosynthesis. Cell wall formation. The sequence is that of D-alanine--D-alanine ligase from Helicobacter pylori (strain ATCC 700392 / 26695) (Campylobacter pylori).